Here is a 473-residue protein sequence, read N- to C-terminus: tRNA-2-methylthio-N(6)-dimethylallyladenosine synthase (473 aa).

The interval 1–21 is disordered; the sequence is MTQDSALLQAPEAIPSESLRD. An MTTase N-terminal domain is found at 26-146; the sequence is RKVFIKTYGC…LPEALRRAKQ (121 aa). Residues Cys-35, Cys-71, Cys-109, Cys-187, Cys-191, and Cys-194 each coordinate [4Fe-4S] cluster. Residues 173-405 enclose the Radical SAM core domain; it reads RARGVTAFLT…QMLLLKQQQE (233 aa). Residues 408-470 enclose the TRAM domain; it reads ESCVGKEIDL…TNSLFAEHAE (63 aa).

Belongs to the methylthiotransferase family. MiaB subfamily. Monomer. [4Fe-4S] cluster is required as a cofactor.

The protein localises to the cytoplasm. It carries out the reaction N(6)-dimethylallyladenosine(37) in tRNA + (sulfur carrier)-SH + AH2 + 2 S-adenosyl-L-methionine = 2-methylsulfanyl-N(6)-dimethylallyladenosine(37) in tRNA + (sulfur carrier)-H + 5'-deoxyadenosine + L-methionine + A + S-adenosyl-L-homocysteine + 2 H(+). Catalyzes the methylthiolation of N6-(dimethylallyl)adenosine (i(6)A), leading to the formation of 2-methylthio-N6-(dimethylallyl)adenosine (ms(2)i(6)A) at position 37 in tRNAs that read codons beginning with uridine. This is tRNA-2-methylthio-N(6)-dimethylallyladenosine synthase from Rhizobium johnstonii (strain DSM 114642 / LMG 32736 / 3841) (Rhizobium leguminosarum bv. viciae).